Reading from the N-terminus, the 108-residue chain is Small ribosomal subunit protein eS25y (108 aa).

The tract at residues 1-36 (MAPKKDKVPPPSSKPAKSGGGKQKKKKWSKGKQKEK) is disordered. Residues 22–31 (KQKKKKWSKG) are compositionally biased toward basic residues.

Belongs to the eukaryotic ribosomal protein eS25 family.

The chain is Small ribosomal subunit protein eS25y (RPS25B) from Arabidopsis thaliana (Mouse-ear cress).